A 162-amino-acid chain; its full sequence is MHLADLIETTLSGMGYELVELERAPAGLLRVYIDQPETGIAIEDCEKVSRQLTHVFTVENVDYERLEVSSPGLDRPLKKLADYVRFAGEEARVTLRLPVNGQKNFTGILREPTGAAGEEKIGLEFEGKDGPALLEFAVSDVDKARLVPVIDFKGNQRKGNKQ.

This sequence belongs to the RimP family.

Its subcellular location is the cytoplasm. Functionally, required for maturation of 30S ribosomal subunits. The chain is Ribosome maturation factor RimP from Cupriavidus necator (strain ATCC 17699 / DSM 428 / KCTC 22496 / NCIMB 10442 / H16 / Stanier 337) (Ralstonia eutropha).